Reading from the N-terminus, the 70-residue chain is MIFYKQRNAHLKPNETINYKDIDLLRKFITDQSKIVSRRSNGLTVKQQKQLAKSIKKARILALLPFVNKD.

Belongs to the bacterial ribosomal protein bS18 family. As to quaternary structure, part of the 30S ribosomal subunit.

The protein resides in the plastid. It is found in the chloroplast. This chain is Small ribosomal subunit protein bS18c, found in Gracilaria tenuistipitata var. liui (Red alga).